Consider the following 241-residue polypeptide: Ion-translocating oxidoreductase complex subunit E (241 aa).

Helical transmembrane passes span 22–42 (LLGL…IGLG), 69–89 (IPIY…VIKA), 91–111 (AFNL…NCIV), 124–144 (VLVS…TMFL), 157–177 (LFFG…IEVL), and 182–202 (VFLL…VLAG).

This sequence belongs to the NqrDE/RnfAE family. As to quaternary structure, the complex is composed of six subunits: RnfA, RnfB, RnfC, RnfD, RnfE and RnfG.

It localises to the cell inner membrane. In terms of biological role, part of a membrane-bound complex that couples electron transfer with translocation of ions across the membrane. This chain is Ion-translocating oxidoreductase complex subunit E, found in Buchnera aphidicola subsp. Baizongia pistaciae (strain Bp).